A 493-amino-acid polypeptide reads, in one-letter code: Cell division protein FtsA (493 aa).

Residues 434 to 468 form a disordered region; it reads AHQSNPTPHIHSSPTERNLSDLKTPSAPLNTAKND. Over residues 436–465 the composition is skewed to polar residues; the sequence is QSNPTPHIHSSPTERNLSDLKTPSAPLNTA.

This sequence belongs to the FtsA/MreB family. As to quaternary structure, self-interacts. Interacts with FtsZ.

Its subcellular location is the cell inner membrane. Its function is as follows. Cell division protein that is involved in the assembly of the Z ring. May serve as a membrane anchor for the Z ring. In Helicobacter pylori (strain J99 / ATCC 700824) (Campylobacter pylori J99), this protein is Cell division protein FtsA.